The following is a 115-amino-acid chain: Putative membrane protein insertion efficiency factor (115 aa).

Belongs to the UPF0161 family.

Its subcellular location is the cell membrane. Could be involved in insertion of integral membrane proteins into the membrane. The chain is Putative membrane protein insertion efficiency factor from Mycobacterium avium (strain 104).